The chain runs to 204 residues: MGNKCSRSKVKEPKRKDIDELAERENLKKQSEEIIEEKPEEVVEQVEETHEEPLEQEQELDEQKIEEEEEEPEQVPKEEIDYATQENKSFEEKHLEDLERSNSDIYSESQKFDNASDKLETGTQLTLSTEATGAVQQITKLSEPAHEESIYFTYRSVTPCDMNKLDETAKVFSRRCGCDLGERHDENACKICRKIDLSDTPLLS.

A disordered region spans residues 1–86 (MGNKCSRSKV…KEEIDYATQE (86 aa)). Gly2 is lipidated: N-myristoyl glycine. Positions 2-29 (GNKCSRSKVKEPKRKDIDELAERENLKK) are targets GAP45 to the cell membrane; however, dispensable for the formation of the glideosome complex and the association with the inner membrane complex. Basic and acidic residues predominate over residues 9–53 (KVKEPKRKDIDELAERENLKKQSEEIIEEKPEEVVEQVEETHEEP). Positions 54 to 73 (LEQEQELDEQKIEEEEEEPE) are enriched in acidic residues. Ser89 carries the post-translational modification Phosphoserine; by CPK10. At Ser103 the chain carries Phosphoserine; by CPK10 and PKB. Ser149 is modified (phosphoserine; by CPK10).

In terms of assembly, component of the glideosome complex composed of GAP50, GAP45, MTIP and MyoA; the complex is formed during the late schizont stage and in merozoites. MyoA, MTIP and GAP45 probably form an initial complex in the cytoplasm which is then recruited to the outer face of the inner membrane complex via the interaction with GAP50. Interacts with GAP50; the interaction is independent of GAP45 phosphorylation status and can also occur independently of the formation of the glideosome complex. Post-translationally, phosphorylated at multiple sites. Phosphorylation increases during the schizont stage and peaks in segmented merozoites. May be phosphorylated by PKB. In schizonts, phosphorylated at Ser-89 and Ser-149 in response to phospholipase C-mediated calcium release. Phosphorylation at Ser-149 begins in early schizonts while phosphorylation at Ser-103 begins in late schizonts. Phosphorylation at Ser-89, Ser-103 and Ser-149 appears to be dispensable for GAP45 inner membrane complex localization or GAP45 inclusion in the glideosome complex. Phosphorylation is not required for interaction with GAP50; however, it may regulate the interaction with MTIP and MyoA. N-myristoylated by NMT. N-myristoylation may contribute to the targeting of GAP45 to the inner membrane complex with the subsequent palmitoylation strengthening the interaction with the membrane. In terms of processing, palmitoylated. Palmitoylation appears to follow N-myristoylation and may strengthen the interaction with the inner membrane complex.

It is found in the inner membrane complex. Its function is as follows. Component of the glideosome complex, an inner membrane complex structure involved in parasite gliding motility and host cell invasion. During the asexual blood stage, required in schizonts to recruit MTIP and MyoA to the inner membrane complex where they assemble with GAP50 to form the glideosome complex. By regulating the formation of the glideosome, plays an essential role during merozoite invasion of host erythrocytes. The protein is Glideosome-associated protein 45 of Plasmodium falciparum (isolate 3D7).